We begin with the raw amino-acid sequence, 236 residues long: Small ribosomal subunit protein uS2c (236 aa).

This sequence belongs to the universal ribosomal protein uS2 family.

It is found in the plastid. The protein resides in the chloroplast. The sequence is that of Small ribosomal subunit protein uS2c (rps2) from Chaetosphaeridium globosum (Charophycean green alga).